An 89-amino-acid chain; its full sequence is Small ribosomal subunit protein uS15 (89 aa).

This sequence belongs to the universal ribosomal protein uS15 family. As to quaternary structure, part of the 30S ribosomal subunit. Forms a bridge to the 50S subunit in the 70S ribosome, contacting the 23S rRNA.

Functionally, one of the primary rRNA binding proteins, it binds directly to 16S rRNA where it helps nucleate assembly of the platform of the 30S subunit by binding and bridging several RNA helices of the 16S rRNA. Forms an intersubunit bridge (bridge B4) with the 23S rRNA of the 50S subunit in the ribosome. In Prochlorococcus marinus (strain MIT 9312), this protein is Small ribosomal subunit protein uS15.